We begin with the raw amino-acid sequence, 120 residues long: Cell cycle protein GpsB (120 aa).

A coiled-coil region spans residues 32–68 (LDDIIKDYETYAALVKELREENRRLKEELAAKPVEKA). The tract at residues 63 to 88 (KPVEKAPVQPTQPVQSTQATQSTVES) is disordered. Over residues 68–86 (APVQPTQPVQSTQATQSTV) the composition is skewed to low complexity.

It belongs to the GpsB family. As to quaternary structure, forms polymers through the coiled coil domains. Interacts with PBP1, MreC and EzrA.

It is found in the cytoplasm. Functionally, divisome component that associates with the complex late in its assembly, after the Z-ring is formed, and is dependent on DivIC and PBP2B for its recruitment to the divisome. Together with EzrA, is a key component of the system that regulates PBP1 localization during cell cycle progression. Its main role could be the removal of PBP1 from the cell pole after pole maturation is completed. Also contributes to the recruitment of PBP1 to the division complex. Not essential for septum formation. This is Cell cycle protein GpsB from Streptococcus sanguinis (strain SK36).